We begin with the raw amino-acid sequence, 194 residues long: Large ribosomal subunit protein uL22 (194 aa).

Belongs to the universal ribosomal protein uL22 family.

The protein is Large ribosomal subunit protein uL22 (rpl17) of Aspergillus fumigatus (strain ATCC MYA-4609 / CBS 101355 / FGSC A1100 / Af293) (Neosartorya fumigata).